Here is a 277-residue protein sequence, read N- to C-terminus: Large ribosomal subunit protein uL2 (277 aa).

3 disordered regions span residues 1 to 20 (MGIR…SVSD), 27 to 55 (TQPE…RHRG), and 207 to 277 (KAGR…RNQS). Polar residues predominate over residues 27 to 48 (TQPEKSLTTYKHSSQGRNNRGV). Composition is skewed to basic residues over residues 207-220 (KAGR…RPHV) and 259-277 (TRNR…RNQS).

It belongs to the universal ribosomal protein uL2 family. In terms of assembly, part of the 50S ribosomal subunit. Forms a bridge to the 30S subunit in the 70S ribosome.

Functionally, one of the primary rRNA binding proteins. Required for association of the 30S and 50S subunits to form the 70S ribosome, for tRNA binding and peptide bond formation. It has been suggested to have peptidyltransferase activity; this is somewhat controversial. Makes several contacts with the 16S rRNA in the 70S ribosome. The sequence is that of Large ribosomal subunit protein uL2 from Gloeothece citriformis (strain PCC 7424) (Cyanothece sp. (strain PCC 7424)).